The following is a 58-amino-acid chain: Small ribosomal subunit protein bS21 (58 aa).

The disordered stretch occupies residues 36–58 (EHYEKPSVKRKKKSEAARRRKYR). Residues 43–58 (VKRKKKSEAARRRKYR) show a composition bias toward basic residues.

Belongs to the bacterial ribosomal protein bS21 family.

The protein is Small ribosomal subunit protein bS21 of Symbiobacterium thermophilum (strain DSM 24528 / JCM 14929 / IAM 14863 / T).